An 858-amino-acid polypeptide reads, in one-letter code: Bifunctional uridylyltransferase/uridylyl-removing enzyme (858 aa).

A uridylyltransferase region spans residues 1–324; sequence MSASVAEPPP…PATSGVTRVL (324 aa). The interval 325–681 is uridylyl-removing; sequence SPGRFVEKQG…ARPSPVGDAL (357 aa). The 123-residue stretch at 443-565 folds into the HD domain; that stretch reads VDQHILMVLR…VGSERRLTAL (123 aa). ACT domains are found at residues 682–761 and 790–858; these read QVLV…PEPS and ILSV…AIAV.

This sequence belongs to the GlnD family. The cofactor is Mg(2+).

It catalyses the reaction [protein-PII]-L-tyrosine + UTP = [protein-PII]-uridylyl-L-tyrosine + diphosphate. The enzyme catalyses [protein-PII]-uridylyl-L-tyrosine + H2O = [protein-PII]-L-tyrosine + UMP + H(+). Uridylyltransferase (UTase) activity is inhibited by glutamine, while glutamine activates uridylyl-removing (UR) activity. Its function is as follows. Modifies, by uridylylation and deuridylylation, the PII regulatory proteins (GlnB and homologs), in response to the nitrogen status of the cell that GlnD senses through the glutamine level. Under low glutamine levels, catalyzes the conversion of the PII proteins and UTP to PII-UMP and PPi, while under higher glutamine levels, GlnD hydrolyzes PII-UMP to PII and UMP (deuridylylation). Thus, controls uridylylation state and activity of the PII proteins, and plays an important role in the regulation of nitrogen assimilation and metabolism. This is Bifunctional uridylyltransferase/uridylyl-removing enzyme from Burkholderia mallei (strain NCTC 10247).